A 721-amino-acid polypeptide reads, in one-letter code: Solute carrier family 12 member 8 (721 aa).

11 helical membrane passes run 53–73, 84–104, 115–135, 136–156, 174–194, 196–216, 247–267, 283–303, 321–341, 374–394, and 397–417; these read FGTW…VVLF, GVLL…VTVL, IGSG…VGGT, IGVL…TGFA, ISLA…KWII, LQLL…IGSF, FFTV…GFNM, LAAI…LGAI, LVGG…CMGG, PVAA…IGQV, and LAPI…YSYF. 2 disordered regions span residues 473-505 and 533-580; these read PNHT…KQTL and NESQ…STVA. Positions 553 to 565 are enriched in acidic residues; the sequence is TESDEPDSEEDVD. Transmembrane regions (helical) follow at residues 606–626 and 628–648; these read FLGA…YALV and LGVA…LNPG.

It belongs to the SLC12A transporter family.

It localises to the membrane. Cation/chloride cotransporter. The protein is Solute carrier family 12 member 8 (slc12a8) of Xenopus laevis (African clawed frog).